We begin with the raw amino-acid sequence, 308 residues long: GTPase Era (308 aa).

Residues 9-179 enclose the Era-type G domain; the sequence is RAGFVALIGE…RAWLGASLPE (171 aa). A G1 region spans residues 17–24; sequence GEPNAGKS. 17-24 provides a ligand contact to GTP; sequence GEPNAGKS. Residues 43-47 are G2; the sequence is QTTRA. The interval 64–67 is G3; that stretch reads DTPG. GTP is bound by residues 64-68 and 129-132; these read DTPGL and NKID. Residues 129–132 form a G4 region; it reads NKID. A G5 region spans residues 158-160; it reads ISA. Residues 210-287 form the KH type-2 domain; sequence LHQELPYQLT…HLFLQVKVRP (78 aa).

This sequence belongs to the TRAFAC class TrmE-Era-EngA-EngB-Septin-like GTPase superfamily. Era GTPase family. As to quaternary structure, monomer.

It is found in the cytoplasm. It localises to the cell inner membrane. Its function is as follows. An essential GTPase that binds both GDP and GTP, with rapid nucleotide exchange. Plays a role in 16S rRNA processing and 30S ribosomal subunit biogenesis and possibly also in cell cycle regulation and energy metabolism. The protein is GTPase Era of Dinoroseobacter shibae (strain DSM 16493 / NCIMB 14021 / DFL 12).